The following is a 239-amino-acid chain: Gag polyprotein (239 aa).

A compositionally biased stretch (basic and acidic residues) spans 124 to 141 (KGEEVGETTAQRDAKMAP). The tract at residues 124–144 (KGEEVGETTAQRDAKMAPEKM) is disordered. A PPXY motif motif is present at residues 172–175 (PPPY). The disordered stretch occupies residues 184 to 214 (LAGVGEQQGQGGDTPWGAEQPRAEPGHAGLA).

Its subcellular location is the virion. The protein is Gag polyprotein (ev-1) of Galliformes.